Here is a 90-residue protein sequence, read N- to C-terminus: Small ribosomal subunit protein bS20 (90 aa).

Over residues 1 to 11 the composition is skewed to basic and acidic residues; it reads MANIKSSEKDI. Residues 1–29 form a disordered region; that stretch reads MANIKSSEKDIRRTKRRNAANSQNRSRLR.

It belongs to the bacterial ribosomal protein bS20 family.

In terms of biological role, binds directly to 16S ribosomal RNA. This Leptospira borgpetersenii serovar Hardjo-bovis (strain JB197) protein is Small ribosomal subunit protein bS20.